A 216-amino-acid polypeptide reads, in one-letter code: Elongation factor Ts (216 aa).

Positions 81–84 are involved in Mg(2+) ion dislocation from EF-Tu; the sequence is TDFV.

The protein belongs to the EF-Ts family.

It is found in the cytoplasm. Associates with the EF-Tu.GDP complex and induces the exchange of GDP to GTP. It remains bound to the aminoacyl-tRNA.EF-Tu.GTP complex up to the GTP hydrolysis stage on the ribosome. This chain is Elongation factor Ts, found in Geotalea daltonii (strain DSM 22248 / JCM 15807 / FRC-32) (Geobacter daltonii).